The following is a 126-amino-acid chain: MDTHTTKLVAISLLLLLVISDYTRLMIQVHSYVPFCAYTYDYFSYCLDFLTGYYYKPGKKCCVHIVKLNIIAKHKKENPRLLCNCVEMMTRGYTPPMLADKIQQLPLLCNTHLSFPISSSMDCSTV.

The first 20 residues, 1–20, serve as a signal peptide directing secretion; it reads MDTHTTKLVAISLLLLLVIS. 4 disulfides stabilise this stretch: Cys-36–Cys-85, Cys-46–Cys-61, Cys-62–Cys-109, and Cys-83–Cys-123.

It belongs to the plant LTP family.

In terms of biological role, plant non-specific lipid-transfer proteins transfer phospholipids as well as galactolipids across membranes. May play a role in wax or cutin deposition in the cell walls of expanding epidermal cells and certain secretory tissues. In Arabidopsis thaliana (Mouse-ear cress), this protein is Non-specific lipid-transfer protein 13 (LTP13).